The chain runs to 377 residues: Succinyl-diaminopimelate desuccinylase (377 aa).

Position 67 (His67) interacts with Zn(2+). Asp69 is an active-site residue. Asp100 contributes to the Zn(2+) binding site. Catalysis depends on Glu134, which acts as the Proton acceptor. Zn(2+) is bound by residues Glu135, Glu163, and His349.

The protein belongs to the peptidase M20A family. DapE subfamily. As to quaternary structure, homodimer. It depends on Zn(2+) as a cofactor. Co(2+) is required as a cofactor.

The catalysed reaction is N-succinyl-(2S,6S)-2,6-diaminopimelate + H2O = (2S,6S)-2,6-diaminopimelate + succinate. It participates in amino-acid biosynthesis; L-lysine biosynthesis via DAP pathway; LL-2,6-diaminopimelate from (S)-tetrahydrodipicolinate (succinylase route): step 3/3. In terms of biological role, catalyzes the hydrolysis of N-succinyl-L,L-diaminopimelic acid (SDAP), forming succinate and LL-2,6-diaminopimelate (DAP), an intermediate involved in the bacterial biosynthesis of lysine and meso-diaminopimelic acid, an essential component of bacterial cell walls. This Actinobacillus pleuropneumoniae serotype 3 (strain JL03) protein is Succinyl-diaminopimelate desuccinylase.